The primary structure comprises 253 residues: Ubiquinone biosynthesis O-methyltransferase (253 aa).

Residues Arg47, Gly78, Asp99, and Met141 each contribute to the S-adenosyl-L-methionine site.

Belongs to the methyltransferase superfamily. UbiG/COQ3 family.

It carries out the reaction a 3-demethylubiquinol + S-adenosyl-L-methionine = a ubiquinol + S-adenosyl-L-homocysteine + H(+). It catalyses the reaction a 3-(all-trans-polyprenyl)benzene-1,2-diol + S-adenosyl-L-methionine = a 2-methoxy-6-(all-trans-polyprenyl)phenol + S-adenosyl-L-homocysteine + H(+). It functions in the pathway cofactor biosynthesis; ubiquinone biosynthesis. Its function is as follows. O-methyltransferase that catalyzes the 2 O-methylation steps in the ubiquinone biosynthetic pathway. In Rhodopseudomonas palustris (strain BisB5), this protein is Ubiquinone biosynthesis O-methyltransferase.